Here is a 313-residue protein sequence, read N- to C-terminus: Acetaldehyde dehydrogenase 1 (313 aa).

16–19 (SGNI) provides a ligand contact to NAD(+). Cys-131 acts as the Acyl-thioester intermediate in catalysis. NAD(+) contacts are provided by residues 162–170 (SAGPGTRAN) and Asn-281.

It belongs to the acetaldehyde dehydrogenase family.

The catalysed reaction is acetaldehyde + NAD(+) + CoA = acetyl-CoA + NADH + H(+). This chain is Acetaldehyde dehydrogenase 1, found in Mycobacterium sp. (strain JLS).